Consider the following 173-residue polypeptide: Pyridoxal 5'-phosphate synthase subunit PdxT (173 aa).

49 to 51 (GES) contributes to the L-glutamine binding site. Catalysis depends on C81, which acts as the Nucleophile. L-glutamine contacts are provided by residues R113 and 141 to 142 (IR).

It belongs to the glutaminase PdxT/SNO family. In terms of assembly, in the presence of PdxS, forms a dodecamer of heterodimers. Only shows activity in the heterodimer.

The catalysed reaction is aldehydo-D-ribose 5-phosphate + D-glyceraldehyde 3-phosphate + L-glutamine = pyridoxal 5'-phosphate + L-glutamate + phosphate + 3 H2O + H(+). It catalyses the reaction L-glutamine + H2O = L-glutamate + NH4(+). The protein operates within cofactor biosynthesis; pyridoxal 5'-phosphate biosynthesis. Catalyzes the hydrolysis of glutamine to glutamate and ammonia as part of the biosynthesis of pyridoxal 5'-phosphate. The resulting ammonia molecule is channeled to the active site of PdxS. The chain is Pyridoxal 5'-phosphate synthase subunit PdxT from Mycolicibacterium paratuberculosis (strain ATCC BAA-968 / K-10) (Mycobacterium paratuberculosis).